Here is a 285-residue protein sequence, read N- to C-terminus: Glutamate racemase (285 aa).

Substrate is bound by residues 28–29 (DS) and 60–61 (YG). The active-site Proton donor/acceptor is the cysteine 92. Position 93–94 (93–94 (NT)) interacts with substrate. Cysteine 204 (proton donor/acceptor) is an active-site residue. 205 to 206 (TH) contributes to the substrate binding site.

Belongs to the aspartate/glutamate racemases family.

It catalyses the reaction L-glutamate = D-glutamate. Its pathway is cell wall biogenesis; peptidoglycan biosynthesis. Provides the (R)-glutamate required for cell wall biosynthesis. This is Glutamate racemase from Escherichia coli O6:H1 (strain CFT073 / ATCC 700928 / UPEC).